Consider the following 875-residue polypeptide: METTTITSILDDNNNNNNNNNNNNNNNNNNNNNNNNNNNNNNNNNYNYKEWDNEMVCKWLHDTKRIQKVSIEIFKANEITGNYLESLTDKMLLKMGLTIRDLLSFRSEFDDLKNIFNETNLYNNIQKNSIDYSIDNNNLNNLNNNNNNNNNNNNNNNNNNNNNNNNNNKTIKAPTIDISQYVFIKQMKGSVNCSLEKYINKKTKERILIKRIGKSNINEETIINEISILCSIDHPNIIKTYGYYKDENYYYVASKFYPKGSIKTKSKSTPYNEINAKKVFGKVLKAIDYLHSLDPPIIHRDINSDNILFDENDEPILIDFGLSYKELKDDNNNDDDNYDNHNHNHNHNHNHNHDNDNDNDTNVKIKTQCMEPRWPSPEIHREPPHFSKESDIFSFGCTLFEILGYIITTPIIILPSIPSGMSLECQILFNETTKIDSCFRPTSKQLLNFSWFKETALLTSSEPQPLEPQPQPKPQTSQSKPKPSSSLSSSELPPQPPLESQSKPKPSQSKTQPTQPQSKLNPSSPPSSSSSSLSEPPKPQPSQSKPKPSSSLSSEPPPLEPQPKPQTSQSKPKPSSSLSSSEPPPLEPQPTQSSKPQPSQSKPQPIQSQPTQPQPTQPKSSKQQPQSKQQQQQQQQQQQQQQQQQQQQQQQQKSKPEQSKSKPEQSQSKPQPGQPLQSPSKPQPIPSTTKTTTTTTTTTTPNNNNNNNNNNNNNNNNNNNNIITSINLIECFKKNNSKIIISKDMEFDNPYEKTLHEKHLLKLGISDCKQININHKYFKKVLSFLNSHLTSALQMKMGPYQVDIAPEFDNIFKTLFISLVLEKIDKDTLLKGGKDLGDTSSTLILYTFYYFLSNTLIYQIILHKPTSFKLVGKLK.

Residues 1 to 12 (METTTITSILDD) show a composition bias toward polar residues. Residues 1 to 47 (METTTITSILDDNNNNNNNNNNNNNNNNNNNNNNNNNNNNNNNNNYN) are disordered. The span at 13 to 45 (NNNNNNNNNNNNNNNNNNNNNNNNNNNNNNNNN) shows a compositional bias: low complexity. Positions 51-116 (WDNEMVCKWL…SEFDDLKNIF (66 aa)) constitute an SAM domain. Positions 135–162 (DNNNLNNLNNNNNNNNNNNNNNNNNNNN) form a coiled coil. Positions 136-168 (NNNLNNLNNNNNNNNNNNNNNNNNNNNNNNNNN) are enriched in low complexity. Positions 136 to 170 (NNNLNNLNNNNNNNNNNNNNNNNNNNNNNNNNNKT) are disordered. Residues 181-452 (YVFIKQMKGS…SKQLLNFSWF (272 aa)) enclose the Protein kinase domain. ATP-binding positions include 187–195 (MKGSVNCSL) and Lys210. The active-site Proton acceptor is the Asp301. Disordered regions lie at residues 331–362 (NNNDDDNYDNHNHNHNHNHNHNHDNDNDNDTN) and 461–718 (SEPQ…NNNN). The span at 474–554 (PQTSQSKPKP…KPKPSSSLSS (81 aa)) shows a compositional bias: low complexity. Positions 555–564 (EPPPLEPQPK) are enriched in pro residues. 3 stretches are compositionally biased toward low complexity: residues 565–581 (PQTSQSKPKPSSSLSSS), 589–611 (QPTQSSKPQPSQSKPQPIQSQPT), and 617–653 (QPKSSKQQPQSKQQQQQQQQQQQQQQQQQQQQQQQQK). A coiled-coil region spans residues 626-655 (QSKQQQQQQQQQQQQQQQQQQQQQQQQKSK). The segment covering 654-663 (SKPEQSKSKP) has biased composition (basic and acidic residues). Residues 664–718 (EQSQSKPQPGQPLQSPSKPQPIPSTTKTTTTTTTTTTPNNNNNNNNNNNNNNNNN) show a composition bias toward low complexity. A helical membrane pass occupies residues 842–862 (TLILYTFYYFLSNTLIYQIIL).

This sequence belongs to the protein kinase superfamily. Ser/Thr protein kinase family.

It localises to the membrane. The enzyme catalyses L-seryl-[protein] + ATP = O-phospho-L-seryl-[protein] + ADP + H(+). It catalyses the reaction L-threonyl-[protein] + ATP = O-phospho-L-threonyl-[protein] + ADP + H(+). This chain is Probable serine/threonine-protein kinase samkC (samkC), found in Dictyostelium discoideum (Social amoeba).